Reading from the N-terminus, the 925-residue chain is Periplasmic nitrate reductase (925 aa).

Positions 1-30 (MDRREFIKSSAAAAACSAAGIAVPSSLSAA) form a signal peptide, tat-type signal. One can recognise a 4Fe-4S Mo/W bis-MGD-type domain in the interval 36-92 (WRWDKSACRFCGTGCGIMVATKNGKIVAVKGDPLAPVNRGLNCIKGYFNAKIMYGED). Cys43, Cys46, Cys50, and Cys78 together coordinate [4Fe-4S] cluster. Mo-bis(molybdopterin guanine dinucleotide) contacts are provided by residues Lys80, Gln148, Asn173, Cys177, 210–217 (WGANMAEM), Met418, Gln422, Asn528, 553–554 (SD), Lys576, Asp603, and 815–824 (TGRVLEHWHS). Trp891 contacts substrate. Asn899 and Lys916 together coordinate Mo-bis(molybdopterin guanine dinucleotide).

The protein belongs to the prokaryotic molybdopterin-containing oxidoreductase family. NasA/NapA/NarB subfamily. In terms of assembly, component of the periplasmic nitrate reductase NapAB complex composed of NapA and NapB. It depends on [4Fe-4S] cluster as a cofactor. Mo-bis(molybdopterin guanine dinucleotide) serves as cofactor. In terms of processing, predicted to be exported by the Tat system. The position of the signal peptide cleavage has not been experimentally proven.

It localises to the periplasm. It catalyses the reaction 2 Fe(II)-[cytochrome] + nitrate + 2 H(+) = 2 Fe(III)-[cytochrome] + nitrite + H2O. In terms of biological role, catalytic subunit of the periplasmic nitrate reductase complex NapAB. Receives electrons from NapB and catalyzes the reduction of nitrate to nitrite. The chain is Periplasmic nitrate reductase from Campylobacter fetus subsp. fetus (strain 82-40).